A 60-amino-acid polypeptide reads, in one-letter code: Conotoxin PnMRCL-022 (60 aa).

The first 22 residues, 1-22 (MRCLPVFVILLLLIASTPSVNA), serve as a signal peptide directing secretion. Positions 23–45 (RPKTKDLASFHDNAKRTQHIFWS) are excised as a propeptide.

It belongs to the conotoxin T superfamily. Post-translationally, contains 2 disulfide bonds that can be either 'C1-C3, C2-C4' or 'C1-C4, C2-C3', since these disulfide connectivities have been observed for conotoxins with cysteine framework V (for examples, see AC P0DQQ7 and AC P81755). Expressed by the venom duct.

The protein localises to the secreted. This chain is Conotoxin PnMRCL-022, found in Conus pennaceus (Feathered cone).